The chain runs to 535 residues: Alpha-1,3-mannosyl-glycoprotein 4-beta-N-acetylglucosaminyltransferase A (535 aa).

The Cytoplasmic portion of the chain corresponds to 1–4 (MRLR). A helical; Signal-anchor for type II membrane protein transmembrane segment spans residues 5 to 27 (NGTVATALAFITSFLTLSWYTTW). Residues 28–63 (QNGKEKLIAYQREFLALKERLRIAEHRISQRSSELN) adopt a coiled-coil conformation. The Lumenal segment spans residues 28-535 (QNGKEKLIAY…NEIHIKKATK (508 aa)). Residues Asn77 and Asn458 are each glycosylated (N-linked (GlcNAc...) asparagine). Ser474 carries the phosphoserine modification.

This sequence belongs to the glycosyltransferase 54 family. Requires a divalent metal cation as cofactor. Post-translationally, N-glycosylated.

Its subcellular location is the golgi apparatus membrane. The protein localises to the secreted. It catalyses the reaction N(4)-{beta-D-GlcNAc-(1-&gt;2)-alpha-D-Man-(1-&gt;3)-[beta-D-GlcNAc-(1-&gt;2)-alpha-D-Man-(1-&gt;6)]-beta-D-Man-(1-&gt;4)-beta-D-GlcNAc-(1-&gt;4)-beta-D-GlcNAc}-L-asparaginyl-[protein] + UDP-N-acetyl-alpha-D-glucosamine = N(4)-{beta-D-GlcNAc-(1-&gt;2)-[beta-D-GlcNAc-(1-&gt;4)]-alpha-D-Man-(1-&gt;3)-[beta-D-GlcNAc-(1-&gt;2)-alpha-D-Man-(1-&gt;6)]-beta-D-Man-(1-&gt;4)-beta-D-GlcNAc-(1-&gt;4)-beta-D-GlcNAc}-L-asparaginyl-[protein] + UDP + H(+). The enzyme catalyses an N(4)-{beta-D-GlcNAc-(1-&gt;2)-alpha-D-Man-(1-&gt;3)-[alpha-D-Man-(1-&gt;6)]-beta-D-Man-(1-&gt;4)-beta-D-GlcNAc-(1-&gt;4)-beta-D-GlcNAc}-L-asparaginyl-[protein] + UDP-N-acetyl-alpha-D-glucosamine = an N(4)-{beta-D-GlcNAc-(1-&gt;2)-[beta-D-GlcNAc-(1-&gt;4)]-alpha-D-Man-(1-&gt;3)-[alpha-D-Man-(1-&gt;6)]-beta-D-Man-(1-&gt;4)-beta-D-GlcNAc-(1-&gt;4)-beta-D-GlcNAc}-L-asparaginyl-[protein] + UDP + H(+). It carries out the reaction an N(4)-{beta-D-GlcNAc-(1-&gt;2)-alpha-D-Man-(1-&gt;3)-[beta-D-GlcNAc-(1-&gt;2)-[beta-D-GlcNAc-(1-&gt;6)]-alpha-D-Man-(1-&gt;6)]-beta-D-Man-(1-&gt;4)-beta-D-GlcNAc-(1-&gt;4)-beta-D-GlcNAc}-L-asparaginyl-[protein] + UDP-N-acetyl-alpha-D-glucosamine = an N(4)-{beta-D-GlcNAc-(1-&gt;2)-[beta-D-GlcNAc-(1-&gt;4)]-alpha-D-Man-(1-&gt;3)-[beta-D-GlcNAc-(1-&gt;2)-[beta-D-GlcNAc-(1-&gt;6)]-alpha-D-Man-(1-&gt;6)]-beta-D-Man-(1-&gt;4)-beta-D-GlcNAc-(1-&gt;4)-beta-D-GlcNAc}-L-asparaginyl-[protein] + UDP + H(+). The catalysed reaction is an N(4)-{beta-D-GlcNAc-(1-&gt;2)-alpha-D-Man-(1-&gt;3)-[beta-D-GlcNAc-(1-&gt;2)-alpha-D-Man-(1-&gt;6)]-beta-D-Man-(1-&gt;4)-beta-D-GlcNAc-(1-&gt;4)-[alpha-L-Fuc-(1-&gt;6)]-beta-D-GlcNAc}-L-asparaginyl-[protein] + UDP-N-acetyl-alpha-D-glucosamine = N(4)-{beta-D-GlcNAc-(1-&gt;2)-[beta-D-GlcNAc-(1-&gt;4)]-alpha-D-Man-(1-&gt;3)-[beta-D-GlcNAc-(1-&gt;2)-alpha-D-Man-(1-&gt;6)]-beta-D-Man-(1-&gt;4)-beta-D-GlcNAc-(1-&gt;4)-[alpha-L-Fuc-(1-&gt;6)]-beta-D-GlcNAc}-asparaginyl-[protein] + UDP + H(+). It catalyses the reaction an N(4)-{beta-D-GlcNAc-(1-&gt;2)-alpha-D-Man-(1-&gt;3)-[beta-D-Gal-(1-&gt;4)-beta-D-GlcNAc-(1-&gt;2)-alpha-D-Man-(1-&gt;6)]-beta-D-Man-(1-&gt;4)-beta-D-GlcNAc-(1-&gt;4)-beta-D-GlcNAc}-L-asparaginyl-[protein] + UDP-N-acetyl-alpha-D-glucosamine = an N(4)-{beta-D-GlcNAc-(1-&gt;2)-[beta-D-GlcNAc-(1-&gt;4)]-alpha-D-Man-(1-&gt;3)-[beta-D-Gal-(1-&gt;4)-beta-D-GlcNAc-(1-&gt;2)-alpha-D-Man-(1-&gt;6)]-beta-D-Man-(1-&gt;4)-beta-D-GlcNAc-(1-&gt;4)-beta-D-GlcNAc}-L-asparaginyl-[protein] + UDP + H(+). The enzyme catalyses N(4)-{beta-D-GlcNAc-(1-&gt;2)-alpha-D-Man-(1-&gt;3)-[alpha-D-Man-(1-&gt;3)-{alpha-D-Man-(1-&gt;6)}-alpha-D-Man-(1-&gt;6)]-beta-D-Man-(1-&gt;4)-beta-D-GlcNAc-(1-&gt;4)-beta-D-GlcNAc}-asparaginyl-[protein] + UDP-N-acetyl-alpha-D-glucosamine = N(4)-{beta-D-GlcNAc-(1-&gt;2)-[beta-D-GlcNAc-(1-&gt;4)]-alpha-D-Man-(1-&gt;3)-[alpha-D-Man-(1-&gt;3)-{alpha-D-Man-(1-&gt;6)}-alpha-D-Man-(1-&gt;6)]-beta-D-Man-(1-&gt;4)-beta-D-GlcNAc-(1-&gt;4)-beta-D-GlcNAc}-asparaginyl-[protein] + UDP + H(+). It carries out the reaction N(4)-{beta-D-GlcNAc-(1-&gt;2)-alpha-D-Man-(1-&gt;3)-beta-D-Man-(1-&gt;4)-beta-D-GlcNAc-(1-&gt;4)-beta-D-GlcNAc}-asparaginyl-[protein] + UDP-N-acetyl-alpha-D-glucosamine = N(4)-{beta-D-GlcNAc-(1-&gt;2)-[beta-D-GlcNAc-(1-&gt;4)]-alpha-D-Man-(1-&gt;3)-beta-D-Man-(1-&gt;4)-beta-D-GlcNAc-(1-&gt;4)-beta-D-GlcNAc}-asparaginyl-[protein] + UDP + H(+). Its pathway is protein modification; protein glycosylation. With respect to regulation, inhibited by UDP. Its function is as follows. Glycosyltransferase that catalyze the transfer of GlcNAc from UDP-GlcNAc to the GlcNAcbeta1-2Manalpha1-3 arm of the core structure of N-linked glycans through a beta1-4 linkage and participates in the production of tri- and tetra-antennary N-linked sugar chains. Involved in glucose transport by mediating SLC2A2/GLUT2 glycosylation, thereby controlling cell-surface expression of SLC2A2 in pancreatic beta cells. The polypeptide is Alpha-1,3-mannosyl-glycoprotein 4-beta-N-acetylglucosaminyltransferase A (Macaca fascicularis (Crab-eating macaque)).